A 247-amino-acid polypeptide reads, in one-letter code: 5-oxoprolinase subunit A (247 aa).

Belongs to the LamB/PxpA family. As to quaternary structure, forms a complex composed of PxpA, PxpB and PxpC.

It carries out the reaction 5-oxo-L-proline + ATP + 2 H2O = L-glutamate + ADP + phosphate + H(+). Its function is as follows. Catalyzes the cleavage of 5-oxoproline to form L-glutamate coupled to the hydrolysis of ATP to ADP and inorganic phosphate. The protein is 5-oxoprolinase subunit A of Vibrio vulnificus (strain YJ016).